The following is a 466-amino-acid chain: Transcription factor eupR (466 aa).

The segment covering 1 to 18 (MFSTEPRSDTAPGSPSCS) has biased composition (polar residues). The disordered stretch occupies residues 1-22 (MFSTEPRSDTAPGSPSCSETKR). The zn(2)-C6 fungal-type DNA-binding region spans 32 to 62 (CWECKRRKVKCSYSNPSDPRCIGCRRRGTKC).

The protein localises to the nucleus. Functionally, transcription factor; part of the gene cluster that mediates the biosynthesis of eupenifeldin, a bistropolone meroterpenoid that acts as an antitumor agent. The chain is Transcription factor eupR from Phoma sp.